The sequence spans 457 residues: tRNA-2-methylthio-N(6)-dimethylallyladenosine synthase (457 aa).

The 116-residue stretch at 18 to 133 folds into the MTTase N-terminal domain; sequence KKLFIETYGC…LPELIASVEA (116 aa). Residues Cys-27, Cys-63, Cys-97, Cys-171, Cys-175, and Cys-178 each coordinate [4Fe-4S] cluster. The region spanning 157-390 is the Radical SAM core domain; it reads CGNHISGFVS…IALQNRLSAE (234 aa). Residues 393–456 form the TRAM domain; it reads NRCIGKTYEV…SATLKGEEVF (64 aa).

The protein belongs to the methylthiotransferase family. MiaB subfamily. As to quaternary structure, monomer. [4Fe-4S] cluster serves as cofactor.

It is found in the cytoplasm. The catalysed reaction is N(6)-dimethylallyladenosine(37) in tRNA + (sulfur carrier)-SH + AH2 + 2 S-adenosyl-L-methionine = 2-methylsulfanyl-N(6)-dimethylallyladenosine(37) in tRNA + (sulfur carrier)-H + 5'-deoxyadenosine + L-methionine + A + S-adenosyl-L-homocysteine + 2 H(+). Functionally, catalyzes the methylthiolation of N6-(dimethylallyl)adenosine (i(6)A), leading to the formation of 2-methylthio-N6-(dimethylallyl)adenosine (ms(2)i(6)A) at position 37 in tRNAs that read codons beginning with uridine. This Bacteroides fragilis (strain ATCC 25285 / DSM 2151 / CCUG 4856 / JCM 11019 / LMG 10263 / NCTC 9343 / Onslow / VPI 2553 / EN-2) protein is tRNA-2-methylthio-N(6)-dimethylallyladenosine synthase.